Reading from the N-terminus, the 251-residue chain is uncharacterized protein (251 aa).

This sequence belongs to the FAM243 family.

This is an uncharacterized protein from Bos taurus (Bovine).